The chain runs to 322 residues: Putative UDP-N-acetylglucosamine--dolichyl-phosphate N-acetylglucosaminephosphotransferase (322 aa).

Helical transmembrane passes span 5 to 25, 46 to 66, 76 to 96, 102 to 122, 123 to 143, 160 to 180, 186 to 206, 222 to 242, and 295 to 315; these read AILL…VWVI, IPLL…FSLL, IPAV…DDIF, VRAF…VGHS, IISI…IIII, LNGL…YIGL, TYQA…FLIF, FIGA…ALAI, and YQVV…AVIL.

This sequence belongs to the glycosyltransferase 4 family.

The protein localises to the cell membrane. It catalyses the reaction a di-trans,poly-cis-dolichyl phosphate + UDP-N-acetyl-alpha-D-glucosamine = an N-acetyl-alpha-D-glucosaminyl-diphospho-di-trans,poly-cis-dolichol + UMP. Its activity is regulated as follows. Inhibited by tunicamycin. This is Putative UDP-N-acetylglucosamine--dolichyl-phosphate N-acetylglucosaminephosphotransferase (gnpTA) from Saccharolobus solfataricus (strain ATCC 35092 / DSM 1617 / JCM 11322 / P2) (Sulfolobus solfataricus).